The chain runs to 616 residues: MSVASAVLRVETWLLATWHVKVPPMWLEACVNWIQEENNNATLSQAQINKQVLEQWLLTDLRDLEHPLLPDDILELPKGELNGFYALQINSLVDVSQPAYSQIQKLRGKNTTNDLVSAETQSTPKPWEVRPSRMLMLQLTDGVTHIQGMEYQSIPALHSGLPPGTKILVRGCILFRLGVLLLKPENVKVLGGEVDGLSEENAQEKVLARLIGELDPTVPVIPNNSIHNVPKVSGGLDAVLGPSDEELLASLDESEESAANNDVAMERSCFSTGTSSNTTPTNPSGFEPGCNISSRPKEKPPNQPTHFTDGEFDDFSLEEALLLEETVQKEQMETKASQPLTLKENTGKCMEIFSHKPSSLNHTALIHKQGNSNFDEKTSEQMIHEDKFFDCASTRNHHKRFSAHDFTNDSKISEVDDAAQQTLSSSNVHCLRNKILNRKLDLSEKSSQISKENGHPFQACSSRSFENNTYLSIGMDLHSPPFIYLSVLMARKPKEVTTVTVKAFIVTLTGNLSSSGGFWGVTAKVSDGTAYLDVDFIDEILTSMIGYSVPEMKQLRKDPLKYKTFLEGLQKCQRDLIDLCCLMTISYDPSSCKGVVLELQDVGMEHVENLKKRLNK.

Position 1 is an N-acetylmethionine (Met-1). Ser-225 carries the phosphoserine modification. The tract at residues 269-311 (CFSTGTSSNTTPTNPSGFEPGCNISSRPKEKPPNQPTHFTDGE) is disordered. Over residues 271–285 (STGTSSNTTPTNPSG) the composition is skewed to low complexity. The residue at position 293 (Ser-293) is a Phosphoserine. Residues Lys-335 and Lys-387 each participate in a glycyl lysine isopeptide (Lys-Gly) (interchain with G-Cter in SUMO2) cross-link.

It belongs to the RMI1 family. Component of the RMI complex, containing at least TOP3A, RMI1 and RMI2. The RMI complex interacts with BLM. Directly interacts with RMI2 and TOP3A. May bind DHJ. Interacts (via N-terminal region) with BLM; the interaction is direct.

Its subcellular location is the nucleus. Its function is as follows. Essential component of the RMI complex, a complex that plays an important role in the processing of homologous recombination intermediates to limit DNA crossover formation in cells. Promotes TOP3A binding to double Holliday junctions (DHJ) and hence stimulates TOP3A-mediated dissolution. Required for BLM phosphorylation during mitosis. Within the BLM complex, required for BLM and TOP3A stability. This Mus musculus (Mouse) protein is RecQ-mediated genome instability protein 1 (Rmi1).